The chain runs to 294 residues: Dof zinc finger protein DOF4.1 (294 aa).

The Dof-type zinc-finger motif lies at 68–122 (RNCPRCNSSNTKFCYYNNYSLAQPRYLCKSCRRYWTEGGSLRNVPVGGGSRKNKK). Zn(2+) contacts are provided by C70, C73, C95, and C98. Disordered regions lie at residues 109-178 (RNVP…DKRA) and 247-294 (MYPY…GPTW). 2 stretches are compositionally biased toward polar residues: residues 126–136 (PNSSTSSSTKN) and 157–173 (KTHQ…SSPM). Residues 251–273 (GDHEDRQQHHHVRHDDGNKKREG) show a composition bias toward basic and acidic residues. The segment covering 284-294 (ILGGDSGGPTW) has biased composition (gly residues).

The protein resides in the nucleus. Transcription factor that binds specifically to a 5'-AA[AG]G-3' consensus core sequence. The sequence is that of Dof zinc finger protein DOF4.1 (DOF4.1) from Arabidopsis thaliana (Mouse-ear cress).